Here is a 221-residue protein sequence, read N- to C-terminus: 7-cyano-7-deazaguanine synthase (221 aa).

An ATP-binding site is contributed by 10–20 (FSGGQDSTTCL). Zn(2+) is bound by residues C187, C196, C199, and C202.

Belongs to the QueC family. As to quaternary structure, homodimer. Zn(2+) serves as cofactor.

It catalyses the reaction 7-carboxy-7-deazaguanine + NH4(+) + ATP = 7-cyano-7-deazaguanine + ADP + phosphate + H2O + H(+). Its pathway is purine metabolism; 7-cyano-7-deazaguanine biosynthesis. In terms of biological role, catalyzes the ATP-dependent conversion of 7-carboxy-7-deazaguanine (CDG) to 7-cyano-7-deazaguanine (preQ(0)). This Shouchella clausii (strain KSM-K16) (Alkalihalobacillus clausii) protein is 7-cyano-7-deazaguanine synthase.